A 170-amino-acid chain; its full sequence is CDP-archaeol synthase (170 aa).

5 helical membrane passes run 6–26, 53–73, 83–103, 114–134, and 140–160; these read LLWAFWYILPAYFANASPVLV, GLIGGVAIGTAVGALQYFITP, LLLAFLLSFGALFGDLVGSFF, PAIGLDQLGFLISALAFAYPV, and GQIIFLLVVSPFVHWGANYFA.

It belongs to the CDP-archaeol synthase family. It depends on Mg(2+) as a cofactor.

It localises to the cell membrane. It catalyses the reaction 2,3-bis-O-(geranylgeranyl)-sn-glycerol 1-phosphate + CTP + H(+) = CDP-2,3-bis-O-(geranylgeranyl)-sn-glycerol + diphosphate. It participates in membrane lipid metabolism; glycerophospholipid metabolism. Its function is as follows. Catalyzes the formation of CDP-2,3-bis-(O-geranylgeranyl)-sn-glycerol (CDP-archaeol) from 2,3-bis-(O-geranylgeranyl)-sn-glycerol 1-phosphate (DGGGP) and CTP. This reaction is the third ether-bond-formation step in the biosynthesis of archaeal membrane lipids. In Thermococcus onnurineus (strain NA1), this protein is CDP-archaeol synthase.